The chain runs to 245 residues: tRNA1(Val) (adenine(37)-N6)-methyltransferase (245 aa).

Belongs to the methyltransferase superfamily. tRNA (adenine-N(6)-)-methyltransferase family.

It localises to the cytoplasm. The catalysed reaction is adenosine(37) in tRNA1(Val) + S-adenosyl-L-methionine = N(6)-methyladenosine(37) in tRNA1(Val) + S-adenosyl-L-homocysteine + H(+). In terms of biological role, specifically methylates the adenine in position 37 of tRNA(1)(Val) (anticodon cmo5UAC). The protein is tRNA1(Val) (adenine(37)-N6)-methyltransferase of Enterobacter sp. (strain 638).